Here is a 336-residue protein sequence, read N- to C-terminus: MTTYNLRLKAKSELTPHPTAQYWRKCQVEELFEMPFMELIFKAAQVHREHFDPQAIQLSTLLSIKTGGCPEECEYCPQSARYDTGLEKQVMMDVEEIVEKAKIAKARGASRFCMGAAWRGPKPKDIKVVSEIIGVVKALGLETCGTFGLLEDGMAEDLKQAGLDYYNHNLDTDPERYNKIVHTRNHDDRMDTLGKVRHAGLKVCCGGIVGMNETRPERAGLIASLANLDPQPESVPINQLIKVEGTPLENAEDLDWTEFVRTIAVARITMPKSYVRLSAGRTSMPEAMQTLCFMAGANSIFYGEKLLTTCNPEEDSDRLLMDKLDLYPLAYEPSDA.

In terms of domain architecture, Radical SAM core spans 54 to 281 (QAIQLSTLLS…KSYVRLSAGR (228 aa)). Cysteine 69, cysteine 73, and cysteine 76 together coordinate [4Fe-4S] cluster. The [2Fe-2S] cluster site is built by cysteine 113, cysteine 144, cysteine 204, and arginine 276.

This sequence belongs to the radical SAM superfamily. Biotin synthase family. In terms of assembly, homodimer. [4Fe-4S] cluster serves as cofactor. It depends on [2Fe-2S] cluster as a cofactor.

The enzyme catalyses (4R,5S)-dethiobiotin + (sulfur carrier)-SH + 2 reduced [2Fe-2S]-[ferredoxin] + 2 S-adenosyl-L-methionine = (sulfur carrier)-H + biotin + 2 5'-deoxyadenosine + 2 L-methionine + 2 oxidized [2Fe-2S]-[ferredoxin]. The protein operates within cofactor biosynthesis; biotin biosynthesis; biotin from 7,8-diaminononanoate: step 2/2. In terms of biological role, catalyzes the conversion of dethiobiotin (DTB) to biotin by the insertion of a sulfur atom into dethiobiotin via a radical-based mechanism. This is Biotin synthase from Actinobacillus pleuropneumoniae serotype 7 (strain AP76).